The sequence spans 572 residues: Proline--tRNA ligase (572 aa).

The protein belongs to the class-II aminoacyl-tRNA synthetase family. ProS type 1 subfamily. As to quaternary structure, homodimer.

The protein resides in the cytoplasm. The enzyme catalyses tRNA(Pro) + L-proline + ATP = L-prolyl-tRNA(Pro) + AMP + diphosphate. In terms of biological role, catalyzes the attachment of proline to tRNA(Pro) in a two-step reaction: proline is first activated by ATP to form Pro-AMP and then transferred to the acceptor end of tRNA(Pro). As ProRS can inadvertently accommodate and process non-cognate amino acids such as alanine and cysteine, to avoid such errors it has two additional distinct editing activities against alanine. One activity is designated as 'pretransfer' editing and involves the tRNA(Pro)-independent hydrolysis of activated Ala-AMP. The other activity is designated 'posttransfer' editing and involves deacylation of mischarged Ala-tRNA(Pro). The misacylated Cys-tRNA(Pro) is not edited by ProRS. The sequence is that of Proline--tRNA ligase from Salmonella choleraesuis (strain SC-B67).